The chain runs to 131 residues: Profilin-9 (131 aa).

A disulfide bridge connects residues Cys13 and Cys115. The short motif at 81–97 (AVIRGKKGSGGITVKKT) is the Involved in PIP2 interaction element. Thr111 carries the post-translational modification Phosphothreonine.

The protein belongs to the profilin family. As to quaternary structure, occurs in many kinds of cells as a complex with monomeric actin in a 1:1 ratio. In terms of processing, phosphorylated by MAP kinases.

Its subcellular location is the cytoplasm. It localises to the cytoskeleton. In terms of biological role, binds to actin and affects the structure of the cytoskeleton. At high concentrations, profilin prevents the polymerization of actin, whereas it enhances it at low concentrations. This chain is Profilin-9, found in Zea mays (Maize).